A 245-amino-acid chain; its full sequence is 1-(5-phosphoribosyl)-5-[(5-phosphoribosylamino)methylideneamino] imidazole-4-carboxamide isomerase (245 aa).

The active-site Proton acceptor is Asp8. Catalysis depends on Asp130, which acts as the Proton donor.

The protein belongs to the HisA/HisF family.

It is found in the cytoplasm. It carries out the reaction 1-(5-phospho-beta-D-ribosyl)-5-[(5-phospho-beta-D-ribosylamino)methylideneamino]imidazole-4-carboxamide = 5-[(5-phospho-1-deoxy-D-ribulos-1-ylimino)methylamino]-1-(5-phospho-beta-D-ribosyl)imidazole-4-carboxamide. The protein operates within amino-acid biosynthesis; L-histidine biosynthesis; L-histidine from 5-phospho-alpha-D-ribose 1-diphosphate: step 4/9. This is 1-(5-phosphoribosyl)-5-[(5-phosphoribosylamino)methylideneamino] imidazole-4-carboxamide isomerase from Pseudomonas fluorescens (strain Pf0-1).